A 296-amino-acid chain; its full sequence is Probable endonuclease 4 (296 aa).

Zn(2+) contacts are provided by histidine 68, histidine 109, glutamate 144, aspartate 178, histidine 181, histidine 213, aspartate 226, histidine 228, and glutamate 258.

The protein belongs to the AP endonuclease 2 family. It depends on Zn(2+) as a cofactor.

The enzyme catalyses Endonucleolytic cleavage to 5'-phosphooligonucleotide end-products.. Endonuclease IV plays a role in DNA repair. It cleaves phosphodiester bonds at apurinic or apyrimidinic (AP) sites, generating a 3'-hydroxyl group and a 5'-terminal sugar phosphate. The chain is Probable endonuclease 4 from Staphylococcus saprophyticus subsp. saprophyticus (strain ATCC 15305 / DSM 20229 / NCIMB 8711 / NCTC 7292 / S-41).